The chain runs to 146 residues: NADH-ubiquinone oxidoreductase chain 6 (146 aa).

The next 4 membrane-spanning stretches (helical) occupy residues 10–30 (ILAI…LLFV), 43–63 (LMGI…FLFI), 81–101 (VIVL…PIAI), and 124–144 (APML…AIAM).

The protein belongs to the complex I subunit 6 family.

Its subcellular location is the mitochondrion membrane. The catalysed reaction is a ubiquinone + NADH + 5 H(+)(in) = a ubiquinol + NAD(+) + 4 H(+)(out). In terms of biological role, core subunit of the mitochondrial membrane respiratory chain NADH dehydrogenase (Complex I) that is believed to belong to the minimal assembly required for catalysis. Complex I functions in the transfer of electrons from NADH to the respiratory chain. The immediate electron acceptor for the enzyme is believed to be ubiquinone. In Candida albicans (strain SC5314 / ATCC MYA-2876) (Yeast), this protein is NADH-ubiquinone oxidoreductase chain 6 (NAD6).